Consider the following 168-residue polypeptide: Photosystem I assembly protein Ycf3 (168 aa).

TPR repeat units follow at residues 29–62 (AFSY…EEDP), 66–99 (SYTL…NANL), and 117–150 (AQSL…APDN).

It belongs to the Ycf3 family.

The protein resides in the plastid. It is found in the chloroplast thylakoid membrane. Functionally, essential for the assembly of the photosystem I (PSI) complex. May act as a chaperone-like factor to guide the assembly of the PSI subunits. The polypeptide is Photosystem I assembly protein Ycf3 (Phaeodactylum tricornutum (strain CCAP 1055/1)).